Reading from the N-terminus, the 879-residue chain is Protein P (879 aa).

Residues methionine 1–glutamine 184 form a terminal protein domain (TP) region. The spacer stretch occupies residues leucine 185–isoleucine 382. The segment at serine 304 to glycine 345 is disordered. The segment at aspartate 383–glutamine 724 is polymerase/reverse transcriptase domain (RT). A Reverse transcriptase domain is found at aspartate 393–isoleucine 634. Residues aspartate 465, aspartate 585, and aspartate 586 each coordinate Mg(2+).

It belongs to the hepadnaviridae P protein family.

It catalyses the reaction DNA(n) + a 2'-deoxyribonucleoside 5'-triphosphate = DNA(n+1) + diphosphate. It carries out the reaction Endonucleolytic cleavage to 5'-phosphomonoester.. With respect to regulation, activated by host HSP70 and HSP40 in vitro to be able to bind the epsilon loop of the pgRNA. Because deletion of the RNase H region renders the protein partly chaperone-independent, the chaperones may be needed indirectly to relieve occlusion of the RNA-binding site by this domain. Inhibited by several reverse-transcriptase inhibitors: Lamivudine, Adefovir and Entecavir. Its function is as follows. Multifunctional enzyme that converts the viral RNA genome into dsDNA in viral cytoplasmic capsids. This enzyme displays a DNA polymerase activity that can copy either DNA or RNA templates, and a ribonuclease H (RNase H) activity that cleaves the RNA strand of RNA-DNA heteroduplexes in a partially processive 3'- to 5'-endonucleasic mode. Neo-synthesized pregenomic RNA (pgRNA) are encapsidated together with the P protein, and reverse-transcribed inside the nucleocapsid. Initiation of reverse-transcription occurs first by binding the epsilon loop on the pgRNA genome, and is initiated by protein priming, thereby the 5'-end of (-)DNA is covalently linked to P protein. Partial (+)DNA is synthesized from the (-)DNA template and generates the relaxed circular DNA (RC-DNA) genome. After budding and infection, the RC-DNA migrates in the nucleus, and is converted into a plasmid-like covalently closed circular DNA (cccDNA). The activity of P protein does not seem to be necessary for cccDNA generation, and is presumably released from (+)DNA by host nuclear DNA repair machinery. This chain is Protein P, found in Woodchuck hepatitis B virus (isolate 1) (WHV).